The following is a 291-amino-acid chain: Nucleotide-binding protein Ccel_2290 (291 aa).

8–15 contacts ATP; the sequence is GMSGAGKS. GTP is bound at residue 59–62; the sequence is DIRG.

The protein belongs to the RapZ-like family.

Its function is as follows. Displays ATPase and GTPase activities. In Ruminiclostridium cellulolyticum (strain ATCC 35319 / DSM 5812 / JCM 6584 / H10) (Clostridium cellulolyticum), this protein is Nucleotide-binding protein Ccel_2290.